Here is a 274-residue protein sequence, read N- to C-terminus: 2,3,4,5-tetrahydropyridine-2,6-dicarboxylate N-succinyltransferase (274 aa).

2 residues coordinate substrate: R104 and D141.

Belongs to the transferase hexapeptide repeat family. In terms of assembly, homotrimer.

It is found in the cytoplasm. It carries out the reaction (S)-2,3,4,5-tetrahydrodipicolinate + succinyl-CoA + H2O = (S)-2-succinylamino-6-oxoheptanedioate + CoA. The protein operates within amino-acid biosynthesis; L-lysine biosynthesis via DAP pathway; LL-2,6-diaminopimelate from (S)-tetrahydrodipicolinate (succinylase route): step 1/3. The polypeptide is 2,3,4,5-tetrahydropyridine-2,6-dicarboxylate N-succinyltransferase (Shewanella denitrificans (strain OS217 / ATCC BAA-1090 / DSM 15013)).